Reading from the N-terminus, the 564-residue chain is NAD-dependent malic enzyme (564 aa).

The active-site Proton donor is the Y102. R155 provides a ligand contact to NAD(+). K173 (proton acceptor) is an active-site residue. The a divalent metal cation site is built by E244, D245, and D268. Residues D268 and N417 each coordinate NAD(+).

Belongs to the malic enzymes family. As to quaternary structure, homotetramer. Mg(2+) serves as cofactor. It depends on Mn(2+) as a cofactor.

The enzyme catalyses (S)-malate + NAD(+) = pyruvate + CO2 + NADH. The catalysed reaction is oxaloacetate + H(+) = pyruvate + CO2. This Pseudomonas aeruginosa (strain LESB58) protein is NAD-dependent malic enzyme.